The primary structure comprises 101 residues: Putative RNA-binding protein RbpA (101 aa).

The region spanning 2–79 (SIYVGNLSYD…RDLKVNKAKP (78 aa)) is the RRM domain. Residues 73–83 (KVNKAKPRENR) are compositionally biased toward basic and acidic residues. Positions 73–101 (KVNKAKPRENRSGGGSFGGGRKSYGGSRY) are disordered. Gly residues predominate over residues 84–101 (SGGGSFGGGRKSYGGSRY).

The protein is Putative RNA-binding protein RbpA (rbpA) of Synechocystis sp. (strain ATCC 27184 / PCC 6803 / Kazusa).